The primary structure comprises 270 residues: Carboxy-terminal domain RNA polymerase II polypeptide A small phosphatase 2 (270 aa).

At Ser-5 the chain carries Phosphoserine. The 159-residue stretch at 96–254 (QDQGRICVVI…LNLIPVFEEL (159 aa)) folds into the FCP1 homology domain. Asp-106 serves as the catalytic 4-aspartylphosphate intermediate. Residues Asp-106, Asp-108, and Asn-217 each coordinate Mg(2+). The active-site Proton donor is the Asp-108.

Monomer. Interacts with REST. Mg(2+) is required as a cofactor. As to expression, expression is restricted to non-neuronal tissues.

Its subcellular location is the nucleus. It catalyses the reaction O-phospho-L-seryl-[protein] + H2O = L-seryl-[protein] + phosphate. It carries out the reaction O-phospho-L-threonyl-[protein] + H2O = L-threonyl-[protein] + phosphate. In terms of biological role, preferentially catalyzes the dephosphorylation of 'Ser-5' within the tandem 7 residue repeats in the C-terminal domain (CTD) of the largest RNA polymerase II subunit POLR2A. Negatively regulates RNA polymerase II transcription, possibly by controlling the transition from initiation/capping to processive transcript elongation. Recruited by REST to neuronal genes that contain RE-1 elements, leading to neuronal gene silencing in non-neuronal cells. The sequence is that of Carboxy-terminal domain RNA polymerase II polypeptide A small phosphatase 2 (Ctdsp2) from Mus musculus (Mouse).